We begin with the raw amino-acid sequence, 345 residues long: Phosphoribosylformylglycinamidine cyclo-ligase (345 aa).

This sequence belongs to the AIR synthase family.

The protein localises to the cytoplasm. The catalysed reaction is 2-formamido-N(1)-(5-O-phospho-beta-D-ribosyl)acetamidine + ATP = 5-amino-1-(5-phospho-beta-D-ribosyl)imidazole + ADP + phosphate + H(+). It functions in the pathway purine metabolism; IMP biosynthesis via de novo pathway; 5-amino-1-(5-phospho-D-ribosyl)imidazole from N(2)-formyl-N(1)-(5-phospho-D-ribosyl)glycinamide: step 2/2. The protein is Phosphoribosylformylglycinamidine cyclo-ligase of Anaeromyxobacter sp. (strain K).